Reading from the N-terminus, the 538-residue chain is Nicotinate phosphoribosyltransferase (538 aa).

Residues tyrosine 21 and threonine 210 each coordinate nicotinate. Histidine 213 is modified (phosphohistidine). Residue arginine 318 participates in nicotinate binding. Threonine 380 is a 5-phospho-alpha-D-ribose 1-diphosphate binding site.

Belongs to the NAPRTase family. Homodimer. Mg(2+) is required as a cofactor. The cofactor is Mn(2+). Transiently phosphorylated on a His residue during the reaction cycle. Phosphorylation strongly increases the affinity for substrates and increases the rate of nicotinate D-ribonucleotide production. Dephosphorylation regenerates the low-affinity form of the enzyme, leading to product release.

The protein resides in the cytoplasm. It localises to the cytosol. It carries out the reaction nicotinate + 5-phospho-alpha-D-ribose 1-diphosphate + ATP + H2O = nicotinate beta-D-ribonucleotide + ADP + phosphate + diphosphate. It participates in cofactor biosynthesis; NAD(+) biosynthesis; nicotinate D-ribonucleotide from nicotinate: step 1/1. Catalyzes the first step in the biosynthesis of NAD from nicotinic acid, the ATP-dependent synthesis of beta-nicotinate D-ribonucleotide from nicotinate and 5-phospho-D-ribose 1-phosphate. Helps prevent cellular oxidative stress via its role in NAD biosynthesis. In Rattus norvegicus (Rat), this protein is Nicotinate phosphoribosyltransferase (Naprt).